The chain runs to 94 residues: MAVLTDDQVDAALPELGGWERADGVLRRSVKFPAFLDGIEAVRRVAERAEAKDHHPDIDIRWRTVTFVLVTHSEGGITEKDLQMAREIDEILDR.

This sequence belongs to the pterin-4-alpha-carbinolamine dehydratase family.

It carries out the reaction (4aS,6R)-4a-hydroxy-L-erythro-5,6,7,8-tetrahydrobiopterin = (6R)-L-erythro-6,7-dihydrobiopterin + H2O. This is Putative pterin-4-alpha-carbinolamine dehydratase from Mycobacterium sp. (strain JLS).